A 132-amino-acid chain; its full sequence is Small ribosomal subunit protein uS8c (132 aa).

The protein belongs to the universal ribosomal protein uS8 family. As to quaternary structure, part of the 30S ribosomal subunit.

Its subcellular location is the plastid. It is found in the chloroplast. Its function is as follows. One of the primary rRNA binding proteins, it binds directly to 16S rRNA central domain where it helps coordinate assembly of the platform of the 30S subunit. This is Small ribosomal subunit protein uS8c (rps8) from Zygnema circumcarinatum (Green alga).